We begin with the raw amino-acid sequence, 467 residues long: uncharacterized protein (467 aa).

The tract at residues 416-467 (KQQRAQTAVVGTTKELVSKATHMKPPRTPPGEAEHRKRSQSLAICQWNKNSR) is disordered. Residues 455 to 467 (QSLAICQWNKNSR) are compositionally biased toward polar residues.

This is an uncharacterized protein from Homo sapiens (Human).